The sequence spans 272 residues: 3-methyl-2-oxobutanoate hydroxymethyltransferase (272 aa).

The Mg(2+) site is built by D42 and D86. Residues 42-43 (DS), D86, and K116 each bind 3-methyl-2-oxobutanoate. E118 serves as a coordination point for Mg(2+). The active-site Proton acceptor is the E185. The segment at 251 to 272 (LKEQRDQRATPTTPPPPPAPDC) is disordered. A compositionally biased stretch (pro residues) spans 262 to 272 (TTPPPPPAPDC).

Belongs to the PanB family. As to quaternary structure, homodecamer; pentamer of dimers. It depends on Mg(2+) as a cofactor.

It is found in the cytoplasm. It catalyses the reaction 3-methyl-2-oxobutanoate + (6R)-5,10-methylene-5,6,7,8-tetrahydrofolate + H2O = 2-dehydropantoate + (6S)-5,6,7,8-tetrahydrofolate. Its pathway is cofactor biosynthesis; (R)-pantothenate biosynthesis; (R)-pantoate from 3-methyl-2-oxobutanoate: step 1/2. Catalyzes the reversible reaction in which hydroxymethyl group from 5,10-methylenetetrahydrofolate is transferred onto alpha-ketoisovalerate to form ketopantoate. The protein is 3-methyl-2-oxobutanoate hydroxymethyltransferase of Synechococcus sp. (strain CC9311).